The sequence spans 185 residues: GTP cyclohydrolase 1 (185 aa).

Zn(2+)-binding residues include Cys-75, His-78, and Cys-146.

The protein belongs to the GTP cyclohydrolase I family. As to quaternary structure, toroid-shaped homodecamer, composed of two pentamers of five dimers.

The catalysed reaction is GTP + H2O = 7,8-dihydroneopterin 3'-triphosphate + formate + H(+). The protein operates within cofactor biosynthesis; 7,8-dihydroneopterin triphosphate biosynthesis; 7,8-dihydroneopterin triphosphate from GTP: step 1/1. The protein is GTP cyclohydrolase 1 of Alkalilimnicola ehrlichii (strain ATCC BAA-1101 / DSM 17681 / MLHE-1).